The primary structure comprises 22 residues: Unknown endosperm protein L (22 aa).

Basic and acidic residues predominate over residues 1-11 (MRHSNKIRDEE). Residues 1-22 (MRHSNKIRDEEMVNNTRLNXXA) form a disordered region. Positions 13-22 (VNNTRLNXXA) are enriched in polar residues.

In terms of processing, the N-terminus is blocked.

This is Unknown endosperm protein L from Hordeum vulgare (Barley).